Reading from the N-terminus, the 926-residue chain is UvrABC system protein A (926 aa).

Gly31–Ser38 is a binding site for ATP. The C4-type zinc finger occupies Cys251–Cys278. 2 ABC transporter domains span residues Ser308–Leu568 and Pro588–Arg916. Position 620–627 (Gly620–Ser627) interacts with ATP. The C4-type zinc finger occupies Cys719–Cys745.

Belongs to the ABC transporter superfamily. UvrA family. As to quaternary structure, forms a heterotetramer with UvrB during the search for lesions.

It is found in the cytoplasm. In terms of biological role, the UvrABC repair system catalyzes the recognition and processing of DNA lesions. UvrA is an ATPase and a DNA-binding protein. A damage recognition complex composed of 2 UvrA and 2 UvrB subunits scans DNA for abnormalities. When the presence of a lesion has been verified by UvrB, the UvrA molecules dissociate. This chain is UvrABC system protein A, found in Aquifex aeolicus (strain VF5).